Here is a 441-residue protein sequence, read N- to C-terminus: ATP-dependent protease ATPase subunit HslU (441 aa).

Residues I18, 60-65 (GVGKTE), D254, E319, and R391 contribute to the ATP site.

This sequence belongs to the ClpX chaperone family. HslU subfamily. As to quaternary structure, a double ring-shaped homohexamer of HslV is capped on each side by a ring-shaped HslU homohexamer. The assembly of the HslU/HslV complex is dependent on binding of ATP.

The protein localises to the cytoplasm. In terms of biological role, ATPase subunit of a proteasome-like degradation complex; this subunit has chaperone activity. The binding of ATP and its subsequent hydrolysis by HslU are essential for unfolding of protein substrates subsequently hydrolyzed by HslV. HslU recognizes the N-terminal part of its protein substrates and unfolds these before they are guided to HslV for hydrolysis. The sequence is that of ATP-dependent protease ATPase subunit HslU from Shewanella denitrificans (strain OS217 / ATCC BAA-1090 / DSM 15013).